A 149-amino-acid polypeptide reads, in one-letter code: Deoxyuridine 5'-triphosphate nucleotidohydrolase (149 aa).

Substrate-binding positions include 66–68 (RSG), Asn79, 83–85 (TID), and Lys93.

Belongs to the dUTPase family. It depends on Mg(2+) as a cofactor.

The enzyme catalyses dUTP + H2O = dUMP + diphosphate + H(+). It participates in pyrimidine metabolism; dUMP biosynthesis; dUMP from dCTP (dUTP route): step 2/2. Functionally, this enzyme is involved in nucleotide metabolism: it produces dUMP, the immediate precursor of thymidine nucleotides and it decreases the intracellular concentration of dUTP so that uracil cannot be incorporated into DNA. The chain is Deoxyuridine 5'-triphosphate nucleotidohydrolase from Corynebacterium glutamicum (strain ATCC 13032 / DSM 20300 / JCM 1318 / BCRC 11384 / CCUG 27702 / LMG 3730 / NBRC 12168 / NCIMB 10025 / NRRL B-2784 / 534).